Reading from the N-terminus, the 255-residue chain is CD320 antigen (255 aa).

The signal sequence occupies residues 1–29 (MNGWVARGLARRAAALGLGLRVLLCFGLC). Residues 30-203 (LEIAPTPIQT…SVQSGNRNVY (174 aa)) are Extracellular-facing. LDL-receptor class A domains follow at residues 52-89 (SCPPTNFQCRSDGRCLPLIWRCDVDQDCPDGSDEEECG) and 120-157 (SCPEGELCCPLDGVCIPSTWLCDGHRDCSDYSDELGCG). Cystine bridges form between C53–C66, C60–C79, C73–C88, C121–C134, C128–C147, and C141–C156. Residues W71, D74, D76, D78, D84, and E85 each contribute to the Ca(2+) site. Residues W139, D142, H144, D146, D152, and E153 each coordinate Ca(2+). N-linked (GlcNAc...) asparagine glycosylation is found at N177 and N183. A helical membrane pass occupies residues 204-224 (GIIAAVAVLSISLAAGILFAL). At 225–255 (SRLCAQGCLAPLGLLVSMKGSLQPEKKTSVL) the chain is on the cytoplasmic side.

In terms of assembly, interacts (via LDL-receptor class A domains) with TCN2.

It localises to the cell membrane. In terms of biological role, receptor for transcobalamin saturated with cobalamin (TCbl). Plays an important role in cobalamin uptake. Plasma membrane protein that is expressed on follicular dendritic cells (FDC) and mediates interaction with germinal center B cells. Functions as a costimulator to promote B cell responses to antigenic stimuli; promotes B cell differentiation and proliferation. Germinal center-B (GC-B) cells differentiate into memory B-cells and plasma cells (PC) through interaction with T-cells and follicular dendritic cells (FDC). CD320 augments the proliferation of PC precursors generated by IL-10. This Bos taurus (Bovine) protein is CD320 antigen (CD320).